The sequence spans 311 residues: MGRPSRRGRDIDGIVLLDKPLGLSSNDLLQKVKRLFRANKAGHTGALDPLATGMLPVCLGEATKFSQHLLDADKRYRVIARLGERTDTSDAEGQTVSVRPVSLDKTRLEAALDHFRGESSQVPSMFSALKHQGRPLYEYARKGITVEREARPIHVYDLQLHRWDLTKVELEIHCSKGTYIRTIIDDLGERLGCGAHVMALRRLAVARYPIERMVTLAALQAIAADAPPDTLAQLDALLLPMDSAVADMPLVNLPSDLAARLRLGQTVAVTAQPQAGLVRLTEGDAGRFFGIGEIAAPGRLTPRRLIAEPRA.

A substrate-binding site is contributed by His43. Catalysis depends on Asp48, which acts as the Nucleophile. Substrate-binding residues include Tyr76, Tyr179, and Leu200.

This sequence belongs to the pseudouridine synthase TruB family. Type 1 subfamily.

The enzyme catalyses uridine(55) in tRNA = pseudouridine(55) in tRNA. Its function is as follows. Responsible for synthesis of pseudouridine from uracil-55 in the psi GC loop of transfer RNAs. The polypeptide is tRNA pseudouridine synthase B (Sodalis glossinidius (strain morsitans)).